A 313-amino-acid chain; its full sequence is 2-oxoglutarate-dependent dioxygenase eupC (313 aa).

Residues 187 to 284 form the Fe2OG dioxygenase domain; that stretch reads PSIPMRFLHY…LNAKALDGSG (98 aa). Fe cation-binding residues include histidine 212, aspartate 214, and histidine 263. Lysine 274 is a 2-oxoglutarate binding site.

Belongs to the iron/ascorbate-dependent oxidoreductase family. Fe(2+) serves as cofactor.

The protein operates within secondary metabolite biosynthesis; terpenoid biosynthesis. Functionally, 2-oxoglutarate-dependent dioxygenase; part of the gene cluster that mediates the biosynthesis of eupenifeldin, a bistropolone meroterpenoid that acts as an antitumor agent. The first step of eupenifeldin biosynthesis is the biosynthesis of 3-methylorcinaldehyde performed by the non-reducing polyketide synthase eupA. Oxidative dearomatization of 3-methylorcinaldehyde likely catalyzed by the FAD-dependent monooxygenase eupB is followed by oxidative ring expansion by the 2-oxoglutarate-dependent dioxygenase eupC to provide the first tropolone metabolite, tropolone stipitaldehyde. In parallel, generation of sesquiterpene alpha-humulene from farnesylpyrophosphate (FPP) is catalyzed by the terpene cyclase eupE. The cytochrome P450 monooxygenase eupD then hydroxylates humulene to humulenol. The putative Diels-Alderase eupF probably catalyzes the formation of the tropolone-humulene skeleton by linking humulenol and the polyketide moiety. The short-chain dehydrogenase/reductase eupG and the flavin-dependent monooxygenase eupH are also essential for eupenifeldin biosynthesis and are likely the additional decorating enzymes of the tropolone-humulene skeleton to produce final eupenifeldin or derivatives. This chain is 2-oxoglutarate-dependent dioxygenase eupC, found in Phoma sp.